We begin with the raw amino-acid sequence, 188 residues long: tRNA(Phe) 7-((3-amino-3-carboxypropyl)-4-demethylwyosine(37)-N(4))-methyltransferase (188 aa).

It belongs to the TYW3 family.

It catalyses the reaction 4-demethyl-7-[(3S)-3-amino-3-carboxypropyl]wyosine(37) in tRNA(Phe) + S-adenosyl-L-methionine = 7-[(3S)-3-amino-3-carboxypropyl]wyosine(37) in tRNA(Phe) + S-adenosyl-L-homocysteine + H(+). S-adenosyl-L-methionine-dependent methyltransferase that acts as a component of the wyosine derivatives biosynthesis pathway. Probably methylates N-4 position of wybutosine-86 to produce wybutosine-72. In Aeropyrum pernix (strain ATCC 700893 / DSM 11879 / JCM 9820 / NBRC 100138 / K1), this protein is tRNA(Phe) 7-((3-amino-3-carboxypropyl)-4-demethylwyosine(37)-N(4))-methyltransferase.